The sequence spans 473 residues: Adenosylhomocysteinase (473 aa).

Substrate-binding residues include Thr-64, Asp-139, and Glu-199. 200-202 provides a ligand contact to NAD(+); the sequence is TTT. Lys-229 and Asp-233 together coordinate substrate. NAD(+) is bound by residues Asn-234, 263-268, Glu-286, Asn-321, 342-344, and Asn-387; these read GYGDVG and IGH.

The protein belongs to the adenosylhomocysteinase family. NAD(+) serves as cofactor.

The protein localises to the cytoplasm. The enzyme catalyses S-adenosyl-L-homocysteine + H2O = L-homocysteine + adenosine. It functions in the pathway amino-acid biosynthesis; L-homocysteine biosynthesis; L-homocysteine from S-adenosyl-L-homocysteine: step 1/1. Its function is as follows. May play a key role in the regulation of the intracellular concentration of adenosylhomocysteine. The sequence is that of Adenosylhomocysteinase from Paraburkholderia phymatum (strain DSM 17167 / CIP 108236 / LMG 21445 / STM815) (Burkholderia phymatum).